The following is a 240-amino-acid chain: UDP-2,3-diacylglucosamine hydrolase (240 aa).

5 residues coordinate Mn(2+): D9, H11, D43, N81, and H116. 81 to 82 is a binding site for substrate; that stretch reads NR. Substrate is bound by residues D124, S162, K166, K169, and H197. The Mn(2+) site is built by H197 and H199.

Belongs to the LpxH family. Mn(2+) serves as cofactor.

It localises to the cell inner membrane. It catalyses the reaction UDP-2-N,3-O-bis[(3R)-3-hydroxytetradecanoyl]-alpha-D-glucosamine + H2O = 2-N,3-O-bis[(3R)-3-hydroxytetradecanoyl]-alpha-D-glucosaminyl 1-phosphate + UMP + 2 H(+). It participates in glycolipid biosynthesis; lipid IV(A) biosynthesis; lipid IV(A) from (3R)-3-hydroxytetradecanoyl-[acyl-carrier-protein] and UDP-N-acetyl-alpha-D-glucosamine: step 4/6. Hydrolyzes the pyrophosphate bond of UDP-2,3-diacylglucosamine to yield 2,3-diacylglucosamine 1-phosphate (lipid X) and UMP by catalyzing the attack of water at the alpha-P atom. Involved in the biosynthesis of lipid A, a phosphorylated glycolipid that anchors the lipopolysaccharide to the outer membrane of the cell. The sequence is that of UDP-2,3-diacylglucosamine hydrolase from Neisseria meningitidis serogroup C (strain 053442).